Reading from the N-terminus, the 142-residue chain is Large ribosomal subunit protein uL11 (142 aa).

Belongs to the universal ribosomal protein uL11 family. In terms of assembly, part of the ribosomal stalk of the 50S ribosomal subunit. Interacts with L10 and the large rRNA to form the base of the stalk. L10 forms an elongated spine to which L12 dimers bind in a sequential fashion forming a multimeric L10(L12)X complex. Post-translationally, one or more lysine residues are methylated.

Forms part of the ribosomal stalk which helps the ribosome interact with GTP-bound translation factors. The chain is Large ribosomal subunit protein uL11 from Mycobacterium sp. (strain JLS).